We begin with the raw amino-acid sequence, 489 residues long: GTPase Der (489 aa).

2 consecutive EngA-type G domains span residues 30–199 (PVVS…KDKP) and 227–403 (FRLA…SRSH). GTP-binding positions include 36-43 (GRQNVGKS), 85-89 (DTPGL), 151-154 (NKAD), 233-240 (GKPNSGKS), 280-284 (DTAGI), and 345-348 (NKWD). In terms of domain architecture, KH-like spans 404–488 (RKVSTSELNK…PIRLEFRSDR (85 aa)).

Belongs to the TRAFAC class TrmE-Era-EngA-EngB-Septin-like GTPase superfamily. EngA (Der) GTPase family. Associates with the 50S ribosomal subunit.

Functionally, GTPase that plays an essential role in the late steps of ribosome biogenesis. This Leptospira interrogans serogroup Icterohaemorrhagiae serovar Lai (strain 56601) protein is GTPase Der.